We begin with the raw amino-acid sequence, 299 residues long: MSLYPSLEDLKVDKVIQAQTAYSANPASQAFVLVDASAALPPDGNLYPKLYPELSQYMGLSLNEAEICESMPMVSGAPAQGQLVARPSSVNYMVAPVTGNDAGIRRAEIKQGIREVILCKDQDGKIGLRLKSIDNGIFVQLVQANSPASLVGLRFGDQVLQINGENCAGWSSDKAHKVLKQAFGEKITMTIRDRPFERTVTMHKDSSGHVGFIFKSGKITSIVKDSSAARNGLLTDHHICEINGQNVIGLKDAQIADILSTAGTVVTITIMPTFIFEHIIKRMAPSIMKSLMDHTIPEV.

Position 2 is an N-acetylserine (Ser-2). Residues Ser-2–Gly-103 form an interaction with PDCD6IP region. Short sequence motifs (LYPX(n)L motif) lie at residues Leu-3–Leu-7, Leu-46–Leu-50, and Leu-50–Leu-54. Ser-6 is modified (phosphoserine). Tyr-47 bears the Phosphotyrosine mark. PDZ domains follow at residues Glu-115–Arg-194 and Thr-199–Thr-273. A 1,2-diacyl-sn-glycero-3-phospho-(1D-myo-inositol-4,5-bisphosphate) is bound at residue Lys-251 to Asp-252.

In terms of assembly, monomer and homodimer. Interacts with SDC1, SDC2, SDC3, SDC4, NRXN2, EPHA7, EPHB1, NF2 isoform 1, TGFA, IL5RA, NFASC, SDCBP2 and PTPRJ. Interacts with PDCD6IP. Forms a complex with PDCD6IP and SDC2. Interacts (via C-terminus) with TGFBR1. Binds to FZD7; this interaction is increased by inositol trisphosphate (IP3). Interacts with SMO. Post-translationally, phosphorylated on tyrosine residues.

It localises to the cell junction. It is found in the focal adhesion. Its subcellular location is the adherens junction. The protein localises to the cell membrane. The protein resides in the endoplasmic reticulum membrane. It localises to the nucleus. It is found in the melanosome. Its subcellular location is the cytoplasm. The protein localises to the cytosol. The protein resides in the cytoskeleton. It localises to the secreted. It is found in the extracellular exosome. Its subcellular location is the membrane raft. Its function is as follows. Multifunctional adapter protein involved in diverse array of functions including trafficking of transmembrane proteins, neuro and immunomodulation, exosome biogenesis, and tumorigenesis. Positively regulates TGFB1-mediated SMAD2/3 activation and TGFB1-induced epithelial-to-mesenchymal transition (EMT) and cell migration in various cell types. May increase TGFB1 signaling by enhancing cell-surface expression of TGFR1 by preventing the interaction between TGFR1 and CAV1 and subsequent CAV1-dependent internalization and degradation of TGFR1. In concert with SDC1/4 and PDCD6IP, regulates exosome biogenesis. Regulates migration, growth, proliferation, and cell cycle progression in a variety of cancer types. In adherens junctions may function to couple syndecans to cytoskeletal proteins or signaling components. Seems to couple transcription factor SOX4 to the IL-5 receptor (IL5RA). May also play a role in vesicular trafficking. Seems to be required for the targeting of TGFA to the cell surface in the early secretory pathway. This Mus musculus (Mouse) protein is Syntenin-1 (Sdcbp).